We begin with the raw amino-acid sequence, 659 residues long: MNNNDVEDIKKLKYFRLLAKQYPNIALAATEIINLEAILNLPKGTEHFLSDIHGEYEPFVHVLRNGSGVVKRKIEDLFCKSLLESDIKSLATLIYYPEQKLDIVLKEERNIDDWYKITLNRLIEICRFCSSKYTRSKVRKALPADFAYIIEELLHEQFNGIDKEEYYDRIITTIIDIGRAKEFIIALSKLIQRMIIDRLHIIGDIYDRGPRPDIIIDTLMEYHSVDIQWGNHDMLWMGAAAGVRTCVANVLRISTRYANLDLVEEIYGINLLPLATFALKYYRDDPCESFIPKVKEDDPAANQEVDLVSKMHKAITILQFKLEKEIIDRRPEFELEERLLLDKIDYEKGTIILNGTEYKLNDNNFPTIDPKDPYKLTEEESVLIDKLVYSFVNSDKLQKHVRFLFSKGNMYLKFNSNLLFHGCIPLDDDGNLKSMWIQGEEYESKRLLEKFDSLSREGYFEKVGSEEKTYGMDIMWYLWTGPVSPLFGKKKMATFERYFIDDEIAHIEQKTGYYKLRDREEMCDMILREFGLDPSESRIINGHVPVKKKNGESPIKANGKMIVIDGGFSKAYQKQTGIAGYTLIYNSYGLQLVSHEHFSSTEESIMKEKDILSTTLVVEQKLKRKTVEDTDIGKELQVQIKDLKELLLIYRKGIIKEIR.

This sequence belongs to the FBPase class 3 family. Mn(2+) is required as a cofactor.

It catalyses the reaction beta-D-fructose 1,6-bisphosphate + H2O = beta-D-fructose 6-phosphate + phosphate. Its pathway is carbohydrate biosynthesis; gluconeogenesis. This is Fructose-1,6-bisphosphatase class 3 from Clostridium botulinum (strain Alaska E43 / Type E3).